Here is a 213-residue protein sequence, read N- to C-terminus: Histone H1 (213 aa).

Positions 1-25 (MAAATASAAATPAKKAAPKKPAAAP) are enriched in low complexity. Disordered stretches follow at residues 1-30 (MAAA…HPSY) and 81-213 (GEFV…AKSS). The 72-residue stretch at 26–97 (EHPSYKEMLT…GPSGTVKLAK (72 aa)) folds into the H15 domain. Low complexity-rich tracts occupy residues 102 to 113 (AAAPKKPAAKKA), 123 to 137 (KKAA…PKSA), 157 to 176 (KKAA…APVK), and 203 to 213 (PKKAATPAKSS).

The protein belongs to the histone H1/H5 family.

The protein resides in the nucleus. It localises to the chromosome. Could act as an H1-type linker histone. The sequence is that of Histone H1 from Ascobolus immersus.